A 408-amino-acid chain; its full sequence is Acetate kinase (408 aa).

Asparagine 7 is a Mg(2+) binding site. An ATP-binding site is contributed by lysine 14. Arginine 91 provides a ligand contact to substrate. Aspartate 148 acts as the Proton donor/acceptor in catalysis. ATP-binding positions include 208 to 212 (HLGNG), 283 to 285 (DFR), and 331 to 335 (GIGEN). Residue glutamate 384 coordinates Mg(2+).

The protein belongs to the acetokinase family. As to quaternary structure, homodimer. Requires Mg(2+) as cofactor. The cofactor is Mn(2+).

It is found in the cytoplasm. The enzyme catalyses acetate + ATP = acetyl phosphate + ADP. Its pathway is metabolic intermediate biosynthesis; acetyl-CoA biosynthesis; acetyl-CoA from acetate: step 1/2. Inhibited by diethylpyrocarbonate, hydroxylamine and phenylglyoxal. Its function is as follows. Catalyzes the formation of acetyl phosphate from acetate and ATP. Can also catalyze the reverse reaction. Can also phosphorylate propionate, but has very low activity toward butyrate. The chain is Acetate kinase from Methanosarcina thermophila.